Reading from the N-terminus, the 422-residue chain is Cytochrome P-450 monooxygenase DoxA (422 aa).

Residue cysteine 369 participates in heme binding.

The protein belongs to the cytochrome P450 family. Monomer. It depends on heme as a cofactor.

The protein resides in the cytoplasm. It catalyses the reaction 13-deoxydaunorubicin + NADPH + O2 + H(+) = 13-dihydrodaunorubicin + NADP(+) + H2O. The catalysed reaction is 13-dihydrodaunorubicin + NADPH + O2 + H(+) = daunorubicin + NADP(+) + 2 H2O. It carries out the reaction 13-deoxycarminomycin + NADPH + O2 + H(+) = 13-dihydrocarminomycin + NADP(+) + H2O. The enzyme catalyses 13-dihydrocarminomycin + NADPH + O2 + H(+) = carminomycin + NADP(+) + 2 H2O. It participates in antibiotic biosynthesis; daunorubicin biosynthesis. The protein operates within antibiotic biosynthesis; carminomycin biosynthesis. Its activity is regulated as follows. Strongly inhibited by dithiothreitol and high ionic strength buffers. Involved in the biosynthesis of the anthracyclines carminomycin and daunorubicin (daunomycin) which are aromatic polyketide antibiotics that exhibit high cytotoxicity and are widely applied in the chemotherapy of a variety of cancers. In vivo, DoxA catalyzes the C-13 hydroxylation of 13-deoxycarminomycin and 13-deoxydaunorubicin to yield 13-dihydrocarminomycin and 13-dihydrodaunorubicin, respectively, as well as the oxidation of these 13-dihydro-anthracyclines to their respective 13-keto forms, carminomycin and daunorubicin. In vitro, it also catalyzes the C-14 hydroxylation of daunorubicin to form doxorubicin (adriamycin), although this strain is not a doxorubicin producer. It is not able to accept anthracyclinones (aglycones) and anthracyclines with a 10-carbomethoxyl moiety. 13-oxidation of the anthracyclines possessing the 4-methoxy substitution is greatly favored. The anthracycline analog desacetyladriamycin can be oxidized to 10-hydroxydesacetyladriamycin. It can only use NADP. DoxA acts jointly with DauV. This Streptomyces sp. (strain C5) protein is Cytochrome P-450 monooxygenase DoxA (doxA).